The following is a 344-amino-acid chain: Transcription factor JunB (344 aa).

Glycyl lysine isopeptide (Lys-Gly) (interchain with G-Cter in SUMO2) cross-links involve residues Lys4, Lys33, and Lys36. Positions 51 to 65 (KGPGARGPGPEGSGA) are enriched in gly residues. Positions 51-75 (KGPGARGPGPEGSGAGSYFSGQGSD) are disordered. A Glycyl lysine isopeptide (Lys-Gly) (interchain with G-Cter in SUMO2) cross-link involves residue Lys81. Residues Thr102 and Thr104 each carry the phosphothreonine modification. At Ser117 the chain carries Phosphoserine. Lys138 is covalently cross-linked (Glycyl lysine isopeptide (Lys-Gly) (interchain with G-Cter in SUMO2)). Disordered stretches follow at residues 181–202 (NLSS…VGTG) and 237–257 (KEEP…PVSP). Residues 183–192 (SSYSPASAPS) show a composition bias toward low complexity. An N6-acetyllysine; alternate modification is found at Lys237. Residue Lys237 forms a Glycyl lysine isopeptide (Lys-Gly) (interchain with G-Cter in SUMO1); alternate linkage. Lys237 is covalently cross-linked (Glycyl lysine isopeptide (Lys-Gly) (interchain with G-Cter in SUMO2); alternate). Residues 237–250 (KEEPQTVPEARSRD) are compositionally biased toward basic and acidic residues. Residue Ser248 is modified to Phosphoserine. Position 252 is a phosphothreonine (Thr252). Ser256 bears the Phosphoserine mark. Positions 265–292 (RIKVERKRLRNRLAATKCRKRKLERIAR) are basic motif. One can recognise a bZIP domain in the interval 265-328 (RIKVERKRLR…AQLKQKVMTH (64 aa)). The leucine-zipper stretch occupies residues 293–321 (LEDKVKTLKAENAGLSSAAGLLREQVAQL). Residue Lys340 forms a Glycyl lysine isopeptide (Lys-Gly) (interchain with G-Cter in SUMO2) linkage.

Belongs to the bZIP family. Jun subfamily. Binds DNA as a homodimer or as a heterodimer with another member of the Jun/Fos family. Component of an AP-1 transcription factor complex composed of JUN-FOS heterodimers. As part of the AP-1 transcription factor complex, forms heterodimers with FOSB, thereby binding to the AP-1 consensus sequence and stimulating transcription. Interacts with NFE2 (via its WW domains). In terms of processing, ubiquitinated by ITCH, leading to its degradation.

The protein localises to the nucleus. Its function is as follows. Transcription factor involved in regulating gene activity following the primary growth factor response. Binds to the DNA sequence 5'-TGA[GC]TCA-3'. Heterodimerizes with proteins of the FOS family to form an AP-1 transcription complex, thereby enhancing its DNA binding activity to an AP-1 consensus sequence 5'-TGA[GC]TCA-3' and enhancing its transcriptional activity. The protein is Transcription factor JunB (Junb) of Mus musculus (Mouse).